The sequence spans 127 residues: Aspartate 1-decarboxylase (127 aa).

S25 functions as the Schiff-base intermediate with substrate; via pyruvic acid in the catalytic mechanism. S25 is modified (pyruvic acid (Ser)). Substrate is bound at residue T57. The active-site Proton donor is Y58. 73-75 (GAA) lines the substrate pocket.

This sequence belongs to the PanD family. In terms of assembly, heterooctamer of four alpha and four beta subunits. The cofactor is pyruvate. Post-translationally, is synthesized initially as an inactive proenzyme, which is activated by self-cleavage at a specific serine bond to produce a beta-subunit with a hydroxyl group at its C-terminus and an alpha-subunit with a pyruvoyl group at its N-terminus.

It localises to the cytoplasm. It carries out the reaction L-aspartate + H(+) = beta-alanine + CO2. The protein operates within cofactor biosynthesis; (R)-pantothenate biosynthesis; beta-alanine from L-aspartate: step 1/1. In terms of biological role, catalyzes the pyruvoyl-dependent decarboxylation of aspartate to produce beta-alanine. In Carboxydothermus hydrogenoformans (strain ATCC BAA-161 / DSM 6008 / Z-2901), this protein is Aspartate 1-decarboxylase.